The sequence spans 161 residues: Crossover junction endodeoxyribonuclease RuvC (161 aa).

Active-site residues include Asp-7, Glu-67, and Asp-140. The Mg(2+) site is built by Asp-7, Glu-67, and Asp-140.

It belongs to the RuvC family. In terms of assembly, homodimer which binds Holliday junction (HJ) DNA. The HJ becomes 2-fold symmetrical on binding to RuvC with unstacked arms; it has a different conformation from HJ DNA in complex with RuvA. In the full resolvosome a probable DNA-RuvA(4)-RuvB(12)-RuvC(2) complex forms which resolves the HJ. Mg(2+) is required as a cofactor.

It localises to the cytoplasm. It carries out the reaction Endonucleolytic cleavage at a junction such as a reciprocal single-stranded crossover between two homologous DNA duplexes (Holliday junction).. Its function is as follows. The RuvA-RuvB-RuvC complex processes Holliday junction (HJ) DNA during genetic recombination and DNA repair. Endonuclease that resolves HJ intermediates. Cleaves cruciform DNA by making single-stranded nicks across the HJ at symmetrical positions within the homologous arms, yielding a 5'-phosphate and a 3'-hydroxyl group; requires a central core of homology in the junction. The consensus cleavage sequence is 5'-(A/T)TT(C/G)-3'. Cleavage occurs on the 3'-side of the TT dinucleotide at the point of strand exchange. HJ branch migration catalyzed by RuvA-RuvB allows RuvC to scan DNA until it finds its consensus sequence, where it cleaves and resolves the cruciform DNA. The protein is Crossover junction endodeoxyribonuclease RuvC of Natranaerobius thermophilus (strain ATCC BAA-1301 / DSM 18059 / JW/NM-WN-LF).